The following is a 555-amino-acid chain: Meiotic mRNA stability protein kinase SSN3 (555 aa).

A Protein kinase domain is found at 75 to 463 (YEVIGYIAAG…AFNALEHKYF (389 aa)). 81–89 (IAAGTYGKV) lines the ATP pocket. Positions 100 to 138 (TNSANGSSLNGTNAKIPQFDSTQPKSSSSMDMQANTNAL) are enriched in polar residues. The segment at 100–166 (TNSANGSSLN…REDVSPHYNS (67 aa)) is disordered. Lysine 183 is a binding site for ATP. The active-site Proton acceptor is aspartate 286.

It belongs to the protein kinase superfamily. CMGC Ser/Thr protein kinase family. CDC2/CDKX subfamily. Component of the SRB8-11 complex which consists of SRB8, SSN2/SRB9, SSN3/SRB10 and SSN8/SRB11. The SRB8-11 complex associates with the Mediator complex. The SSN3/SRB10 and SSN8/SRB11 kinase-cyclin pair also associate with the RNA polymerase II holoenzyme. Interacts with TUP1.

It localises to the nucleus. The catalysed reaction is L-seryl-[protein] + ATP = O-phospho-L-seryl-[protein] + ADP + H(+). The enzyme catalyses L-threonyl-[protein] + ATP = O-phospho-L-threonyl-[protein] + ADP + H(+). It carries out the reaction [DNA-directed RNA polymerase] + ATP = phospho-[DNA-directed RNA polymerase] + ADP + H(+). Functionally, component of the SRB8-11 complex. The SRB8-11 complex is a regulatory module of the Mediator complex which is itself involved in regulation of basal and activated RNA polymerase II-dependent transcription. The SRB8-11 complex may be involved in the transcriptional repression of a subset of genes regulated by Mediator. It may inhibit the association of the Mediator complex with RNA polymerase II to form the holoenzyme complex. The SRB8-11 complex phosphorylates the C-terminal domain (CTD) of the largest subunit of RNA polymerase II RPB1 at serines 2 and 5. The SSN3/SRB10 and SSN8/SRB11 kinase-cyclin pair may also positively and negatively regulate numerous transcriptional activators in response to changes in nutritional and physiological conditions. Phosphorylates GCN4, promoting its ubiquitin-mediated degradation, and MSN2, promoting its nuclear exclusion. Phosphorylates STE12, thereby promoting its degradation and inhibition of filamentous growth. Phosphorylates GAL4, and this phosphorylation is required for efficient galactose-inducible transcription. Also phosphorylates BDF1 and the TAF2 subunit of the TFIID complex. This chain is Meiotic mRNA stability protein kinase SSN3 (SSN3), found in Saccharomyces cerevisiae (strain ATCC 204508 / S288c) (Baker's yeast).